We begin with the raw amino-acid sequence, 240 residues long: Membrane-spanning 4-domains subfamily A member 15 (240 aa).

The next 4 membrane-spanning stretches (helical) occupy residues 73-93, 100-120, 144-164, and 173-193; these read VLGT…SVLL, VGIF…FIIS, ILSV…FGVT, and LAVL…AMHF.

This sequence belongs to the MS4A family.

The protein resides in the membrane. Functionally, may be involved in signal transduction as a component of a multimeric receptor complex. This is Membrane-spanning 4-domains subfamily A member 15 (MS4A15) from Homo sapiens (Human).